We begin with the raw amino-acid sequence, 648 residues long: Indolepyruvate oxidoreductase subunit IorA (648 aa).

4Fe-4S ferredoxin-type domains follow at residues Pro585–Glu614 and Lys616–Glu645. 8 residues coordinate [4Fe-4S] cluster: Cys594, Cys597, Cys600, Cys606, Cys625, Cys628, Cys631, and Cys635.

As to quaternary structure, heterodimer of the IorA and IorB subunits. It depends on [4Fe-4S] cluster as a cofactor.

It catalyses the reaction indole-3-pyruvate + 2 oxidized [2Fe-2S]-[ferredoxin] + CoA = (indol-3-yl)acetyl-CoA + 2 reduced [2Fe-2S]-[ferredoxin] + CO2 + H(+). In terms of biological role, catalyzes the ferredoxin-dependent oxidative decarboxylation of arylpyruvates. The polypeptide is Indolepyruvate oxidoreductase subunit IorA (iorA) (Pyrococcus abyssi (strain GE5 / Orsay)).